The following is a 600-amino-acid chain: DNA ligase (600 aa).

Asp-259 is an ATP binding site. The active-site N6-AMP-lysine intermediate is Lys-261. Positions 266, 281, 311, 351, 428, and 434 each coordinate ATP.

It belongs to the ATP-dependent DNA ligase family. Mg(2+) is required as a cofactor.

It catalyses the reaction ATP + (deoxyribonucleotide)n-3'-hydroxyl + 5'-phospho-(deoxyribonucleotide)m = (deoxyribonucleotide)n+m + AMP + diphosphate.. Functionally, DNA ligase that seals nicks in double-stranded DNA during DNA replication, DNA recombination and DNA repair. The protein is DNA ligase of Acidianus ambivalens (Desulfurolobus ambivalens).